Here is a 573-residue protein sequence, read N- to C-terminus: 60 kDa lysophospholipase (573 aa).

One can recognise an Asparaginase/glutaminase domain in the interval 9–355 (RRLLAVYTGG…DVRKELLTKD (347 aa)). The active-site Acyl-ester intermediate is the threonine 19. Residues 41–350 (TLPMFHDEEH…PGLSLDVRKE (310 aa)) are asparaginase. Residues 84 to 86 (DSS) and 116 to 117 (TD) contribute to the substrate site. 5 ANK repeats span residues 141–170 (GAQV…YVIP), 399–429 (ALVP…DLGL), 433–462 (NGQT…DVNT), 466–495 (DGFS…SLST), and 533–562 (DGHS…AVGA).

In the N-terminal section; belongs to the asparaginase 1 family. In terms of assembly, monomer.

It catalyses the reaction a 1-acyl-sn-glycero-3-phosphocholine + H2O = sn-glycerol 3-phosphocholine + a fatty acid + H(+). It carries out the reaction L-asparagine + H2O = L-aspartate + NH4(+). The catalysed reaction is a 1-O-alkyl-2-acetyl-sn-glycero-3-phosphocholine + H2O = a 1-O-alkyl-sn-glycero-3-phosphocholine + acetate + H(+). The enzyme catalyses 1-hexadecanoyl-sn-glycero-3-phosphocholine + H2O = sn-glycerol 3-phosphocholine + hexadecanoate + H(+). It catalyses the reaction 2 1-hexadecanoyl-sn-glycero-3-phosphocholine = 1,2-dihexadecanoyl-sn-glycero-3-phosphocholine + sn-glycerol 3-phosphocholine. It carries out the reaction 1-octadecanoyl-sn-glycero-3-phosphocholine + H2O = octadecanoate + sn-glycerol 3-phosphocholine + H(+). The catalysed reaction is 1-(9Z-octadecenoyl)-sn-glycero-3-phosphocholine + H2O = sn-glycerol 3-phosphocholine + (9Z)-octadecenoate + H(+). The enzyme catalyses 1-hexadecanoyl-sn-glycero-3-phosphoethanolamine + H2O = sn-glycero-3-phosphoethanolamine + hexadecanoate + H(+). It catalyses the reaction 1-(9Z-octadecenoyl)-sn-glycero-3-phosphoethanolamine + H2O = sn-glycero-3-phosphoethanolamine + (9Z)-octadecenoate + H(+). It carries out the reaction 1-hexadecanoyl-sn-glycero-3-phosphoethanolamine + 1-hexadecanoyl-sn-glycero-3-phosphocholine = 1,2-dihexadecanoyl-sn-glycero-3-phosphoethanolamine + sn-glycerol 3-phosphocholine. The catalysed reaction is 2-(5Z,8Z,11Z,14Z)-eicosatetraenoyl-sn-glycero-3-phosphocholine + H2O = sn-glycerol 3-phosphocholine + (5Z,8Z,11Z,14Z)-eicosatetraenoate + H(+). The enzyme catalyses 2-hexadecanoyl-sn-glycero-3-phosphocholine + H2O = sn-glycerol 3-phosphocholine + hexadecanoate + H(+). It catalyses the reaction 2 2-hexadecanoyl-sn-glycero-3-phosphocholine = 1,2-dihexadecanoyl-sn-glycero-3-phosphocholine + sn-glycerol 3-phosphocholine. It carries out the reaction 1-O-(9Z)-octadecenoyl-2-O-acetyl-sn-glycero-3-phosphocholine + H2O = 2-acetyl-sn-glycero-3-phosphocholine + (9Z)-octadecenoate + H(+). The catalysed reaction is a 1-acyl-sn-glycero-3-phospho-(1D-myo-inositol) + 1-hexadecanoyl-sn-glycero-3-phosphocholine = a 1-acyl-2-hexadecanoyl-sn-glycero-3-phospho-(1D-myo-inositol) + sn-glycerol 3-phosphocholine. The enzyme catalyses 2 2-(5Z,8Z,11Z,14Z)-eicosatetraenoyl-sn-glycero-3-phosphocholine = 1,2-di-(5Z,8Z,11Z,14Z-eicosatetraenoyl)-sn-glycero-3-phosphocholine + sn-glycerol 3-phosphocholine. Its function is as follows. Exhibits lysophospholipase, transacylase, PAF acetylhydrolase and asparaginase activities. Can catalyze three types of transacylation reactions: (1) acyl transfer from 1-acyl-sn-glycero-3-phosphocholine (1-acyl-GPC) to the sn-1(3) positions of glycerol and 2-acylglycerol (sn-1 to -1(3) transfer), (2) acyl transfer from 1-acyl-GPC to the sn-2 positions of 1-acyl-GPC, 1-acyl-sn-glycero-3-phosphoethanolamine (1-acyl-GPE), and other lysophospholipids (sn-1 to -2 transfer) and (3) acyl transfer from 2-acyl-GPC to the sn-1 position of 2-acyl-GPC and 2-acyl-GPE (sn-2 to -1 transfer). Mediates the synthesis of 1-arachidonoyl species of phospholipids by transferring the arachidonoyl residue from 2-arachidonoyl lysophospholipid to the sn-1 position of 2-acyl lysophospholipid. The sequence is that of 60 kDa lysophospholipase (ASPG) from Homo sapiens (Human).